The sequence spans 45 residues: MTSNTPNQEPVSYPIFTVRWVAVHTLAVPTIFFLGAIAAMQFIQR.

Threonine 2 is modified (N-acetylthreonine). Residues 2–17 (TSNTPNQEPVSYPIFT) lie on the Cytoplasmic side of the membrane. The chain crosses the membrane as a helical span at residues 18-42 (VRWVAVHTLAVPTIFFLGAIAAMQF). Histidine 24 provides a ligand contact to heme. Residues 43–45 (IQR) are Lumenal-facing.

As to quaternary structure, heterodimer of an alpha subunit and a beta subunit. PSII is composed of 1 copy each of membrane proteins PsbA, PsbB, PsbC, PsbD, PsbE, PsbF, PsbH, PsbI, PsbJ, PsbK, PsbL, PsbM, PsbT, PsbX, PsbY, PsbZ, Psb30/Ycf12, peripheral proteins PsbO, CyanoQ (PsbQ), PsbU, PsbV and a large number of cofactors. It forms dimeric complexes. Part of a photosystem II (PSII) assembly intermediate complex PSII-I; crystallized from a strain deleted of psbJ, it forms monomeric PSII before addition of the oxygen evolving complex. PSII-I includes 3 assembly factors not found in mature PSII (Psb27, Psb28 and Psb34). Heme b is required as a cofactor.

The protein resides in the cellular thylakoid membrane. In terms of biological role, this b-type cytochrome is tightly associated with the reaction center of photosystem II (PSII). PSII is a light-driven water:plastoquinone oxidoreductase that uses light energy to abstract electrons from H(2)O, generating O(2) and a proton gradient subsequently used for ATP formation. It consists of a core antenna complex that captures photons, and an electron transfer chain that converts photonic excitation into a charge separation. In Thermosynechococcus vestitus (strain NIES-2133 / IAM M-273 / BP-1), this protein is Cytochrome b559 subunit beta.